The following is a 388-amino-acid chain: Phosphoglycerate kinase (388 aa).

Substrate is bound by residues 24 to 26 (DLN), arginine 37, 56 to 59 (RGGR), arginine 117, and arginine 165. The segment at 26 to 136 (NVPLDSDGEQ…RRPRNVQGRR (111 aa)) is disordered. Residues 34-55 (EQGRITDPGPDHRVGADVERTG) show a composition bias toward basic and acidic residues. The span at 102–136 (GGHRRPGPRRGVDRRRRPAAGKHPVRRPRNVQGRR) shows a compositional bias: basic residues. ATP-binding positions include lysine 215, glycine 303, glutamate 334, and 363-366 (GGDS).

The protein belongs to the phosphoglycerate kinase family. As to quaternary structure, monomer.

The protein localises to the cytoplasm. It catalyses the reaction (2R)-3-phosphoglycerate + ATP = (2R)-3-phospho-glyceroyl phosphate + ADP. It functions in the pathway carbohydrate degradation; glycolysis; pyruvate from D-glyceraldehyde 3-phosphate: step 2/5. This is Phosphoglycerate kinase (pgk) from Mycobacterium avium.